The following is a 207-amino-acid chain: Guanylate kinase (207 aa).

The Guanylate kinase-like domain maps to 10–187 (GFFIVLSAAS…AVERLQVIYQ (178 aa)). 17–24 (AASGTGKT) provides a ligand contact to ATP.

This sequence belongs to the guanylate kinase family.

The protein resides in the cytoplasm. The enzyme catalyses GMP + ATP = GDP + ADP. Its function is as follows. Essential for recycling GMP and indirectly, cGMP. In Syntrophus aciditrophicus (strain SB), this protein is Guanylate kinase.